Consider the following 216-residue polypeptide: Probable nicotinate-nucleotide adenylyltransferase (216 aa).

It belongs to the NadD family.

It carries out the reaction nicotinate beta-D-ribonucleotide + ATP + H(+) = deamido-NAD(+) + diphosphate. It participates in cofactor biosynthesis; NAD(+) biosynthesis; deamido-NAD(+) from nicotinate D-ribonucleotide: step 1/1. Its function is as follows. Catalyzes the reversible adenylation of nicotinate mononucleotide (NaMN) to nicotinic acid adenine dinucleotide (NaAD). The polypeptide is Probable nicotinate-nucleotide adenylyltransferase (Shewanella baltica (strain OS185)).